We begin with the raw amino-acid sequence, 514 residues long: MVVEFKNEPGYDFSVQENVDMFKKALKDVEKELGQDIPLVINGEKIFKDDKIKSINPADTSQVIANASKATKQDVEDAFKAANEAYKSWKTWSANDRAELMLRVSAIIRRRKAEIAAIMVYEAGKPWDEAVGDAAEGIDFIEYYARSMMDLAQGKPVLDREGEHNKYFYKSIGTGVTIPPWNFPFAIMAGTTLAPVVAGNTVLLKPAEDTPYIAYKLMEILEEAGLPKGVVNFVPGDPKEIGDYLVDHKDTHFVTFTGSRATGTRIYERSAVVQEGQNFLKRVIAEMGGKDAIVVDENIDTDMAAEAIVTSAFGFSGQKCSACSRAIVHKDVYDEVLEKSIKLTKELTLGNTVDNTYMGPVINKKQFDKIKNYIEIGKEEGKLEQGGGTDDSKGYFVEPTIISGLKSKDRIMQEEIFGPVVGFVKVNDFDEAIEVANDTDYGLTGAVITNNREHWIKAVNEFDVGNLYLNRGCTSAVVGYHPFGGFKMSGTDAKTGSPDYLLHFLEQKVVSEMF.

Active-site residues include Glu-286 and Cys-320.

This sequence belongs to the aldehyde dehydrogenase family. RocA subfamily.

It catalyses the reaction L-glutamate 5-semialdehyde + NAD(+) + H2O = L-glutamate + NADH + 2 H(+). It functions in the pathway amino-acid degradation; L-proline degradation into L-glutamate; L-glutamate from L-proline: step 2/2. The protein is 1-pyrroline-5-carboxylate dehydrogenase of Staphylococcus aureus (strain MRSA252).